A 550-amino-acid chain; its full sequence is Hydroxylamine reductase (550 aa).

[2Fe-2S] cluster-binding residues include cysteine 3, cysteine 6, cysteine 18, and cysteine 25. The hybrid [4Fe-2O-2S] cluster site is built by histidine 249, glutamate 273, cysteine 317, cysteine 405, cysteine 433, cysteine 458, glutamate 492, and lysine 494. Cysteine persulfide is present on cysteine 405.

It belongs to the HCP family. Requires [2Fe-2S] cluster as cofactor. The cofactor is hybrid [4Fe-2O-2S] cluster.

Its subcellular location is the cytoplasm. It carries out the reaction A + NH4(+) + H2O = hydroxylamine + AH2 + H(+). Catalyzes the reduction of hydroxylamine to form NH(3) and H(2)O. In Escherichia coli O139:H28 (strain E24377A / ETEC), this protein is Hydroxylamine reductase.